A 267-amino-acid chain; its full sequence is Lectin SfL-1 (267 aa).

4 consecutive repeat copies span residues 1–67 (GRYT…RRGD), 68–135 (SNNY…QSGG), 136–202 (DSYN…STGG), and 203–267 (SNYK…GTAI). The interval 1–267 (GRYTVQNQWG…GPIGFKGTAI (267 aa)) is 4 X approximate tandem repeats.

Monomer.

In terms of biological role, lectin specific for high mannose N-glycans, recognizes the branched moiety of these glycans. Does not recognize other types of N-glycans or monosaccharides. This is Lectin SfL-1 from Solieria filiformis (Red alga).